Consider the following 172-residue polypeptide: Adenylate kinase isoenzyme 6 (172 aa).

5 residues coordinate ATP: glycine 13, glycine 15, lysine 16, threonine 17, and threonine 18. Positions asparagine 33–leucine 56 are NMPbind. Residues threonine 108 to aspartate 118 are LID. Residues arginine 109 and lysine 148 each coordinate ATP.

This sequence belongs to the adenylate kinase family. AK6 subfamily. In terms of assembly, monomer and homodimer. Interacts with small ribosomal subunit protein uS11. Not a structural component of 43S pre-ribosomes, but transiently interacts with them by binding to uS11. Interacts with COIL (via C-terminus).

It localises to the cytoplasm. The protein localises to the nucleus. Its subcellular location is the nucleoplasm. The protein resides in the cajal body. The catalysed reaction is AMP + ATP = 2 ADP. It catalyses the reaction ATP + H2O = ADP + phosphate + H(+). Its function is as follows. Broad-specificity nucleoside monophosphate (NMP) kinase that catalyzes the reversible transfer of the terminal phosphate group between nucleoside triphosphates and monophosphates. Also has ATPase activity. Involved in the late cytoplasmic maturation steps of the 40S ribosomal particles, specifically 18S rRNA maturation. While NMP activity is not required for ribosome maturation, ATPase activity is. Associates transiently with small ribosomal subunit protein uS11. ATP hydrolysis breaks the interaction with uS11. May temporarily remove uS11 from the ribosome to enable a conformational change of the ribosomal RNA that is needed for the final maturation step of the small ribosomal subunit. Its NMP activity may have a role in nuclear energy homeostasis. May be involved in regulation of Cajal body (CB) formation. This is Adenylate kinase isoenzyme 6 from Oryctolagus cuniculus (Rabbit).